Reading from the N-terminus, the 76-residue chain is MFDKLKEIIADKLSVNEDEITMESTFIDDLGADSLDIVELIMALEEELEMEIPDEDAEGFKTVGDVVEYITEHTEK.

Residues 1–74 (MFDKLKEIIA…DVVEYITEHT (74 aa)) enclose the Carrier domain. Ser34 carries the post-translational modification O-(pantetheine 4'-phosphoryl)serine.

It belongs to the acyl carrier protein (ACP) family. 4'-phosphopantetheine is transferred from CoA to a specific serine of apo-ACP by AcpS. This modification is essential for activity because fatty acids are bound in thioester linkage to the sulfhydryl of the prosthetic group.

The protein localises to the cytoplasm. The protein operates within lipid metabolism; fatty acid biosynthesis. In terms of biological role, carrier of the growing fatty acid chain in fatty acid biosynthesis. In Clostridium perfringens (strain ATCC 13124 / DSM 756 / JCM 1290 / NCIMB 6125 / NCTC 8237 / Type A), this protein is Acyl carrier protein.